The chain runs to 103 residues: Trp operon repressor homolog (103 aa).

The DNA-binding element occupies 59–82 (QRQISQMLGVGIATITRGSNELKS).

The protein belongs to the TrpR family. Homodimer.

The protein localises to the cytoplasm. In terms of biological role, this protein is an aporepressor. When complexed with L-tryptophan it binds the operator region of the trp operon and prevents the initiation of transcription. This chain is Trp operon repressor homolog, found in Vibrio parahaemolyticus serotype O3:K6 (strain RIMD 2210633).